Here is a 309-residue protein sequence, read N- to C-terminus: p-hydroxybenzoic acid efflux pump subunit AaeA (309 aa).

The helical transmembrane segment at 12 to 32 threads the bilayer; sequence AITVVLVILAFIAIFNAWVYY.

The protein belongs to the membrane fusion protein (MFP) (TC 8.A.1) family.

Its subcellular location is the cell inner membrane. In terms of biological role, forms an efflux pump with AaeB. The chain is p-hydroxybenzoic acid efflux pump subunit AaeA from Escherichia coli O157:H7.